We begin with the raw amino-acid sequence, 370 residues long: Cysteine-type anaerobic sulfatase-maturating enzyme (370 aa).

The Radical SAM core domain occupies 1–227; it reads MPPLSLLIKP…LKNLFDLWYE (227 aa). Residues C15 and C19 each contribute to the [4Fe-4S] cluster site. Y21 serves as a coordination point for S-adenosyl-L-methionine. C22 contributes to the [4Fe-4S] cluster binding site. Positions 66, 122, 134, and 195 each coordinate S-adenosyl-L-methionine. Residues C255, C261, and C276 each coordinate [4Fe-4S] cluster. The Proton acceptor role is filled by D277. Positions 317, 320, 326, 330, and 348 each coordinate [4Fe-4S] cluster.

The protein belongs to the radical SAM superfamily. Anaerobic sulfatase-maturating enzyme family. Requires [4Fe-4S] cluster as cofactor.

The enzyme catalyses L-cysteinyl-[sulfatase] + S-adenosyl-L-methionine + H2O = 3-oxo-L-alanyl-[sulfatase] + hydrogen sulfide + 5'-deoxyadenosine + L-methionine + 2 H(+). It participates in protein modification; sulfatase oxidation. Its function is as follows. Involved in 'Cys-type' sulfatase maturation under anaerobic conditions. Catalyzes the post-translational modification of cysteine into 3-oxoalanine (also known as C(alpha)-formylglycine (FGly)), by a free radical chemical mechanism initiated via the reductive cleavage of S-adenosyl-L-methionine (SAM). This Clostridium perfringens (strain 13 / Type A) protein is Cysteine-type anaerobic sulfatase-maturating enzyme.